The primary structure comprises 181 residues: Oligoribonuclease (181 aa).

The Exonuclease domain maps to 8–171 (LIWIDLEMTG…DDIRESVAEL (164 aa)). Tyr129 is a catalytic residue.

This sequence belongs to the oligoribonuclease family.

Its subcellular location is the cytoplasm. Its function is as follows. 3'-to-5' exoribonuclease specific for small oligoribonucleotides. The chain is Oligoribonuclease from Salmonella choleraesuis (strain SC-B67).